A 559-amino-acid polypeptide reads, in one-letter code: uncharacterized protein (559 aa).

Residues 1–10 (MSGRRGDHPG) are compositionally biased toward basic and acidic residues. The segment at 1-76 (MSGRRGDHPG…ERSRVPPRTT (76 aa)) is disordered. Helical transmembrane passes span 128–148 (FAVDSAMAVALANTLFFAAAS), 155–175 (VALYLLITIAPFAVIAPLIGP), 186–206 (VALALSFGLRTALAVVLIMNY), 208–228 (GATGSFPSWVLYPCALAMMVF), 259–279 (VFGLLGGTIAGGAIAAGVEFV), 283–303 (LFQLPGALFVVVAITIAGASL), 358–378 (LWGNCTIKVMVGFLFLYPAFV), 387–407 (WVQLGMLGLIGAAAAVGNFAG), 428–448 (VLVTVLAIAAAVAGSLAATAI), 490–510 (LAWVLGGAVGVLVYTELWVGF), and 515–535 (ALLILGLAQTIVSFRGDSLIP).

This sequence to M.leprae ML2143.

It is found in the cell membrane. This is an uncharacterized protein from Mycobacterium tuberculosis (strain CDC 1551 / Oshkosh).